A 955-amino-acid chain; its full sequence is Coiled-coil domain-containing protein 146 (955 aa).

Acidic residues predominate over residues 1–17 (MEDSSTDTEKEEEEEKD). A disordered region spans residues 1–22 (MEDSSTDTEKEEEEEKDEKDQE). Coiled-coil stretches lie at residues 114–141 (EAFSTEVSKMREQLLKYQNEYNAVKERE), 169–321 (GEME…AREN), 400–461 (STLS…LLRM), 534–640 (KAHQ…RNES), and 667–832 (NGEI…MKQA).

Interacts with CCDC38 and CCDC42. Interacts with intraflagellar transport proteins IFT20 and IFT88. In terms of assembly, (Microbial infection) Interacts with Chlamydia trachomatis incM/YT288. In host cells infected with C.trachomatis incM, CCDC146 is recruited to the periphery of the pathogen-containing vacuole but recruitment is not dependent on incM. In terms of tissue distribution, widely expressed.

It localises to the cytoplasm. Its subcellular location is the cytoskeleton. It is found in the microtubule organizing center. The protein localises to the centrosome. The protein resides in the centriole. It localises to the flagellum axoneme. Its subcellular location is the cilium basal body. It is found in the midbody. Its function is as follows. Essential for sperm flagellum biogenesis and male fertility. This Homo sapiens (Human) protein is Coiled-coil domain-containing protein 146 (CCDC146).